A 111-amino-acid chain; its full sequence is uncharacterized protein (111 aa).

Residues 1 to 18 form the signal peptide; sequence MGKSMEEGIFVKVFPSKA.

This is an uncharacterized protein from Acidianus convivator (ATV).